A 379-amino-acid chain; its full sequence is L-demethylnoviosyl transferase (379 aa).

It belongs to the glycosyltransferase 28 family.

It carries out the reaction dTDP-4-O-demethyl-beta-L-noviose + novobiocic acid = desmethyldescarbamoylnovobiocin + dTDP + H(+). The protein operates within antibiotic biosynthesis; novobiocin biosynthesis. With respect to regulation, inhibited by TDP-L-rhamnose, the sugar donor that most closely structurally resembles the natural substrate dTDP-beta-L-noviose. In terms of biological role, catalyzes the transfer of L-noviose from dTDP-4-O-demethyl-beta-L-noviose to the phenolic oxygen of novobiocic acid, creating the full ABC ring system in the novobiocin biosynthesis pathway. Novobiocin is an aminocoumarin family antibiotic that targets bacterial DNA gyrases. Also shows activity with variant coumarin aglycones, suggesting it may be a promiscuous catalyst for noviosylation of a range of planar scaffolds. Does not show activity with TDP-L-rhamnose. This Streptomyces niveus (Streptomyces spheroides) protein is L-demethylnoviosyl transferase (novM).